A 118-amino-acid polypeptide reads, in one-letter code: Large ribosomal subunit protein uL18 (118 aa).

This sequence belongs to the universal ribosomal protein uL18 family. As to quaternary structure, part of the 50S ribosomal subunit; part of the 5S rRNA/L5/L18/L25 subcomplex. Contacts the 5S and 23S rRNAs.

This is one of the proteins that bind and probably mediate the attachment of the 5S RNA into the large ribosomal subunit, where it forms part of the central protuberance. In Levilactobacillus brevis (strain ATCC 367 / BCRC 12310 / CIP 105137 / JCM 1170 / LMG 11437 / NCIMB 947 / NCTC 947) (Lactobacillus brevis), this protein is Large ribosomal subunit protein uL18.